A 443-amino-acid chain; its full sequence is Serine/threonine-protein phosphatase 2A 55 kDa regulatory subunit B beta isoform (443 aa).

WD repeat units follow at residues 22 to 61 (TEADIISAVEFNHTGELLATGDKGGRVVIFQREQESKNQV), 87 to 128 (EIEE…KRPE), 171 to 209 (AHTYHINSISVNSDYETYMSADDLRINLWNFEITNQSFN), and 220 to 260 (ELTE…CVTG). Ser-275 carries the phosphoserine modification. WD repeat units lie at residues 279–317 (KLSSSISDVKFSQQWEDIMTRDYLTVKVWDLNMENRPIE), 334–375 (ENDC…DVTL), and 410–442 (DFSKKILHTAWHPSENIIAVAATNNLYIFQDKV). Thr-298 carries the phosphothreonine modification.

The protein belongs to the phosphatase 2A regulatory subunit B family. As to quaternary structure, PP2A consists of a common heterodimeric core enzyme, composed of a 36 kDa catalytic subunit (subunit C) and a 65 kDa constant regulatory subunit (PR65 or subunit A), that associates with a variety of regulatory subunits. Proteins that associate with the core dimer include three families of regulatory subunits B (the R2/B/PR55/B55, R3/B''/PR72/PR130/PR59 and R5/B'/B56 families), the 48 kDa variable regulatory subunit, viral proteins, and cell signaling molecules. Interacts with TOMM22. Interacts with IER5 (via N- and C-terminal regions). As to expression, brain.

Its subcellular location is the cytoplasm. It localises to the cytoskeleton. The protein localises to the membrane. Its function is as follows. The B regulatory subunit might modulate substrate selectivity and catalytic activity, and might also direct the localization of the catalytic enzyme to a particular subcellular compartment. The polypeptide is Serine/threonine-protein phosphatase 2A 55 kDa regulatory subunit B beta isoform (PPP2R2B) (Sus scrofa (Pig)).